The following is an 84-amino-acid chain: Sulfur carrier protein TusA (84 aa).

The active-site Cysteine persulfide intermediate is cysteine 21.

Belongs to the sulfur carrier protein TusA family.

The protein localises to the cytoplasm. Sulfur carrier protein which probably makes part of a sulfur-relay system. The sequence is that of Sulfur carrier protein TusA from Pseudomonas savastanoi pv. phaseolicola (strain 1448A / Race 6) (Pseudomonas syringae pv. phaseolicola (strain 1448A / Race 6)).